The sequence spans 264 residues: ATP synthase subunit a (264 aa).

The next 5 helical transmembrane spans lie at 39–59 (LDTL…FYIV), 97–117 (VAPL…MDLV), 139–159 (TADP…VIFY), 205–225 (LFGN…LPWW), and 239–259 (LLVI…YISL).

The protein belongs to the ATPase A chain family. F-type ATPases have 2 components, CF(1) - the catalytic core - and CF(0) - the membrane proton channel. CF(1) has five subunits: alpha(3), beta(3), gamma(1), delta(1), epsilon(1). CF(0) has three main subunits: a(1), b(2) and c(9-12). The alpha and beta chains form an alternating ring which encloses part of the gamma chain. CF(1) is attached to CF(0) by a central stalk formed by the gamma and epsilon chains, while a peripheral stalk is formed by the delta and b chains.

It localises to the cell inner membrane. Functionally, key component of the proton channel; it plays a direct role in the translocation of protons across the membrane. This chain is ATP synthase subunit a, found in Coxiella burnetii (strain CbuK_Q154) (Coxiella burnetii (strain Q154)).